The chain runs to 129 residues: UPF0212 protein MA_1372 (129 aa).

The protein belongs to the UPF0212 family.

The polypeptide is UPF0212 protein MA_1372 (Methanosarcina acetivorans (strain ATCC 35395 / DSM 2834 / JCM 12185 / C2A)).